A 338-amino-acid polypeptide reads, in one-letter code: Holliday junction branch migration complex subunit RuvB (338 aa).

Residues M1–Y181 form a large ATPase domain (RuvB-L) region. ATP is bound by residues L20, R21, G62, K65, T66, T67, E128–F130, R171, Y181, and R218. Mg(2+) is bound at residue T66. Positions S182–G252 are small ATPAse domain (RuvB-S). Residues E255–V338 are head domain (RuvB-H). DNA is bound by residues R310 and R315.

This sequence belongs to the RuvB family. In terms of assembly, homohexamer. Forms an RuvA(8)-RuvB(12)-Holliday junction (HJ) complex. HJ DNA is sandwiched between 2 RuvA tetramers; dsDNA enters through RuvA and exits via RuvB. An RuvB hexamer assembles on each DNA strand where it exits the tetramer. Each RuvB hexamer is contacted by two RuvA subunits (via domain III) on 2 adjacent RuvB subunits; this complex drives branch migration. In the full resolvosome a probable DNA-RuvA(4)-RuvB(12)-RuvC(2) complex forms which resolves the HJ.

Its subcellular location is the cytoplasm. The catalysed reaction is ATP + H2O = ADP + phosphate + H(+). Its function is as follows. The RuvA-RuvB-RuvC complex processes Holliday junction (HJ) DNA during genetic recombination and DNA repair, while the RuvA-RuvB complex plays an important role in the rescue of blocked DNA replication forks via replication fork reversal (RFR). RuvA specifically binds to HJ cruciform DNA, conferring on it an open structure. The RuvB hexamer acts as an ATP-dependent pump, pulling dsDNA into and through the RuvAB complex. RuvB forms 2 homohexamers on either side of HJ DNA bound by 1 or 2 RuvA tetramers; 4 subunits per hexamer contact DNA at a time. Coordinated motions by a converter formed by DNA-disengaged RuvB subunits stimulates ATP hydrolysis and nucleotide exchange. Immobilization of the converter enables RuvB to convert the ATP-contained energy into a lever motion, pulling 2 nucleotides of DNA out of the RuvA tetramer per ATP hydrolyzed, thus driving DNA branch migration. The RuvB motors rotate together with the DNA substrate, which together with the progressing nucleotide cycle form the mechanistic basis for DNA recombination by continuous HJ branch migration. Branch migration allows RuvC to scan DNA until it finds its consensus sequence, where it cleaves and resolves cruciform DNA. The protein is Holliday junction branch migration complex subunit RuvB of Caldanaerobacter subterraneus subsp. tengcongensis (strain DSM 15242 / JCM 11007 / NBRC 100824 / MB4) (Thermoanaerobacter tengcongensis).